The following is a 270-amino-acid chain: Insulin-like growth factor-binding protein-like 1 (270 aa).

Positions 1-17 (MPRLPLLLLLLPSLARG) are cleaved as a signal peptide. Residues 26–101 (RHPECSPCQQ…PEGTGLCVCA (76 aa)) form the IGFBP N-terminal domain. 7 cysteine pairs are disulfide-bonded: C30/C55, C33/C57, C38/C58, C44/C61, C69/C83, C77/C98, and C107/C143. Residues 87–145 (ASGTAPEGTGLCVCAQRGAVCGSDGRSYSSICALRLRARHAPRAHHGHLHKARDGPCEF) enclose the Kazal-like domain. An Ig-like C2-type domain is found at 147-251 (PVVLMPPRDI…GEAQSHGTVT (105 aa)). N-linked (GlcNAc...) asparagine glycosylation is present at N158. Residues C168 and C235 are joined by a disulfide bond.

It localises to the secreted. In terms of biological role, IGF-binding proteins prolong the half-life of IGFs and have been shown to either inhibit or stimulate the growth promoting effects of the IGFs in cell culture. They alter the interaction of IGFs with their cell surface receptors. The sequence is that of Insulin-like growth factor-binding protein-like 1 (Igfbpl1) from Mus musculus (Mouse).